Consider the following 272-residue polypeptide: 3-methyl-2-oxobutanoate hydroxymethyltransferase (272 aa).

Mg(2+) contacts are provided by aspartate 43 and aspartate 82. Residues 43–44 (DS), aspartate 82, and lysine 112 contribute to the 3-methyl-2-oxobutanoate site. Glutamate 114 provides a ligand contact to Mg(2+). The active-site Proton acceptor is glutamate 179.

It belongs to the PanB family. As to quaternary structure, homodecamer; pentamer of dimers. The cofactor is Mg(2+).

Its subcellular location is the cytoplasm. It catalyses the reaction 3-methyl-2-oxobutanoate + (6R)-5,10-methylene-5,6,7,8-tetrahydrofolate + H2O = 2-dehydropantoate + (6S)-5,6,7,8-tetrahydrofolate. The protein operates within cofactor biosynthesis; (R)-pantothenate biosynthesis; (R)-pantoate from 3-methyl-2-oxobutanoate: step 1/2. Functionally, catalyzes the reversible reaction in which hydroxymethyl group from 5,10-methylenetetrahydrofolate is transferred onto alpha-ketoisovalerate to form ketopantoate. This Staphylococcus aureus (strain bovine RF122 / ET3-1) protein is 3-methyl-2-oxobutanoate hydroxymethyltransferase.